Here is a 562-residue protein sequence, read N- to C-terminus: Phosphopantothenoylcysteine decarboxylase subunit SIS2 (562 aa).

Residues 1–10 show a composition bias toward polar residues; sequence MTAVASTSGK. Disordered stretches follow at residues 1-63, 97-165, and 490-562; these read MTAV…SNAT, FSDL…KDYD, and GYPK…DKHQ. Basic and acidic residues predominate over residues 27–42; sequence GQKEILLDHEDAKGKD. Polar residues-rich tracts occupy residues 44 to 63 and 99 to 113; these read IINS…SNAT and DLKQ…TQLK. 4 positions are modified to phosphoserine: Ser47, Ser50, Ser54, and Ser56. The span at 121 to 134 shows a compositional bias: low complexity; the sequence is SPNSNPAPVSNSIP. Positions 142–156 are enriched in polar residues; that stretch reads NHTNTSRTTQLSGSP. A Phosphoserine modification is found at Ser155. Acidic residues predominate over residues 496–553; sequence EEEDDDEDEEEDDDEEEDTEDKNENNNDDDDDDDDDDDDDDDDDDDDDDDDEDEDEAE.

The protein belongs to the HFCD (homooligomeric flavin containing Cys decarboxylase) superfamily. As to quaternary structure, interacts with the C-terminal domain of PPZ1. Component of the phosphopantothenoylcysteine decarboxylase (PPCDC) complex, a heterotrimer composed of CAB3, SIS2 and VHS3.

It is found in the nucleus. Its subcellular location is the cytoplasm. Its function is as follows. Component of the phosphopantothenoylcysteine decarboxylase (PPCDC) involved in the coenzyme A synthesis. Acts as an inhibitory subunit of protein phosphatase PPZ1, which is involved in many cellular processes such as G1-S transition or salt tolerance. Also modulates the expression of the ENA1 ATPase. The protein is Phosphopantothenoylcysteine decarboxylase subunit SIS2 (SIS2) of Saccharomyces cerevisiae (strain ATCC 204508 / S288c) (Baker's yeast).